Here is a 165-residue protein sequence, read N- to C-terminus: MSWLVGALQTFGSLADVAGTVSNIVYQQRQAAQLEKQNELMETWMNKQEALQKSQMELTRDLSINGPAARVQSALDAGFDEVSARRIAGSGERVIWGNLDRPIMHAGTMDSIRQTKHLDSLSHSLATFKNGTPFGKPAPPTTKFGKPQATTAQINIGHNPGSSSV.

This sequence belongs to the sapovirus VP2 family. In terms of assembly, homooligomer. The portal-like structure consists in 12 copies of VP2. Interacts with capsid protein VP1.

The protein localises to the virion. Its subcellular location is the host cytoplasm. Functionally, minor structural protein that forms a portal-like structure at a unique three-fold axis of symmetry, following binding to the host receptor. The channel formed by VP2 may allow the delivery of the viral genome through the host endosomal membrane. The sequence is that of Minor capsid protein VP2 from Homo sapiens (Human).